We begin with the raw amino-acid sequence, 560 residues long: S100P-binding protein (560 aa).

Disordered stretches follow at residues 259-292 (SDIPFDGDIDELLTLSPGDTTSSEEDKITSESTP) and 313-400 (SSSS…GKSF). Residues 313–352 (SSSSLQLPETSLASSTEPSPSLQLSASSVTAMNGQNNSNK) are compositionally biased toward polar residues. A compositionally biased stretch (basic and acidic residues) spans 378 to 387 (QKVEPKKNKP).

It localises to the nucleus. This chain is S100P-binding protein (s100pbp), found in Xenopus laevis (African clawed frog).